A 156-amino-acid chain; its full sequence is ATP synthase subunit b (156 aa).

The helical transmembrane segment at 7–29 threads the bilayer; it reads LLGQAISFALFVWFCMKYVWPPL.

It belongs to the ATPase B chain family. In terms of assembly, F-type ATPases have 2 components, F(1) - the catalytic core - and F(0) - the membrane proton channel. F(1) has five subunits: alpha(3), beta(3), gamma(1), delta(1), epsilon(1). F(0) has three main subunits: a(1), b(2) and c(10-14). The alpha and beta chains form an alternating ring which encloses part of the gamma chain. F(1) is attached to F(0) by a central stalk formed by the gamma and epsilon chains, while a peripheral stalk is formed by the delta and b chains.

Its subcellular location is the cell inner membrane. Functionally, f(1)F(0) ATP synthase produces ATP from ADP in the presence of a proton or sodium gradient. F-type ATPases consist of two structural domains, F(1) containing the extramembraneous catalytic core and F(0) containing the membrane proton channel, linked together by a central stalk and a peripheral stalk. During catalysis, ATP synthesis in the catalytic domain of F(1) is coupled via a rotary mechanism of the central stalk subunits to proton translocation. In terms of biological role, component of the F(0) channel, it forms part of the peripheral stalk, linking F(1) to F(0). This is ATP synthase subunit b from Vibrio alginolyticus.